The primary structure comprises 651 residues: Probable inactive purple acid phosphatase 9 (651 aa).

A signal peptide spans 1–20; the sequence is MIAAVYTLFFFFLLISSVYS. N-linked (GlcNAc...) asparagine glycosylation is found at N32, N96, and N202. Positions 305 and 308 each coordinate Fe cation. D305 lines the Zn(2+) pocket. A Zn(2+)-binding site is contributed by N338. Residue N338 coordinates substrate. 2 N-linked (GlcNAc...) asparagine glycosylation sites follow: N378 and N432. H444 provides a ligand contact to Zn(2+). N-linked (GlcNAc...) asparagine glycosylation occurs at N475. Zn(2+) is bound at residue H483. 483–485 provides a ligand contact to substrate; it reads HVH. Residue H485 coordinates Fe cation. Residues N495 and N640 are each glycosylated (N-linked (GlcNAc...) asparagine).

Belongs to the metallophosphoesterase superfamily. Purple acid phosphatase family. As to quaternary structure, homodimer. Fe cation is required as a cofactor. Requires Zn(2+) as cofactor. As to expression, expressed in roots, stems, leaves, flowers and siliques.

The protein localises to the secreted. This is Probable inactive purple acid phosphatase 9 (PAP9) from Arabidopsis thaliana (Mouse-ear cress).